We begin with the raw amino-acid sequence, 548 residues long: Serine/threonine-protein phosphatase 2A 56 kDa regulatory subunit delta 1 isoform (548 aa).

Residues M1–S10 show a composition bias toward basic residues. The segment at M1–T75 is disordered. Residues K27–K39 show a composition bias toward basic and acidic residues. A Phosphotyrosine modification is found at Y96. S99, S109, and S542 each carry phosphoserine.

This sequence belongs to the phosphatase 2A regulatory subunit B family. In terms of assembly, PP2A consists of a common heterodimeric core enzyme, composed of a 36 kDa catalytic subunit (subunit C) and a 65 kDa constant regulatory subunit (PR65 or subunit A), that associates with a variety of regulatory subunits. Proteins that associate with the core dimer include three families of regulatory subunits B (the R2/B/PR55/B55, R3/B''/PR72/PR130/PR59 and R5/B'/B56 families), the 48 kDa variable regulatory subunit, viral proteins, and cell signaling molecules.

It is found in the cytoplasm. It localises to the nucleus. Functionally, the B regulatory subunit might modulate substrate selectivity and catalytic activity, and might also direct the localization of the catalytic enzyme to a particular subcellular compartment. Has a role in cell shape control and septum formation. In Schizosaccharomyces pombe (strain 972 / ATCC 24843) (Fission yeast), this protein is Serine/threonine-protein phosphatase 2A 56 kDa regulatory subunit delta 1 isoform (par1).